A 576-amino-acid polypeptide reads, in one-letter code: Adenine deaminase 2 (576 aa).

This sequence belongs to the metallo-dependent hydrolases superfamily. Adenine deaminase family. The cofactor is Mn(2+).

The enzyme catalyses adenine + H2O + H(+) = hypoxanthine + NH4(+). The polypeptide is Adenine deaminase 2 (Desulfotalea psychrophila (strain LSv54 / DSM 12343)).